The following is a 456-amino-acid chain: MFNMKILVIPLFWGLVTGYKGNSSDSSAPRLLLVSFDGFRADYLKSYDLPHLQNFIKEGVLVEHVKNVFITKTFPNHYSIVTGLYEESHGIVANSMYDSVTKKHFSESNDKDPFWWNGAEPIWVTNQLQENRSSAAAMWPGTDVPIHNITASYFMNYSSSVSFKERLGNVTTWLSSSNPPVTFAALYWEEPDVSGHKYGPEDKENMRRVLKEVDDLIGDIVLKLKVLGLWDSLNVIITSDHGMAQCSKNRLIDLDSCIDRSNYSVIDLTPVAAILPKINVTEVYDKLKRCNPHMNVYLKEAIPNRFYYQHSSRIQPIILVAEEGWTITLNKSSFKLGDHGYDNSLPSMHPFLAAHGPAFRKGYRQSTINTVDIYPMMCHILGLKPHPNNGTLSHTKCLLVDQWCINLPEAIGIVVSALLVLTMLTGLMIFMRSRASTSRPFSRLQLQEDDDDPLID.

The signal sequence occupies residues 1-18 (MFNMKILVIPLFWGLVTG). At 19 to 410 (YKGNSSDSSA…DQWCINLPEA (392 aa)) the chain is on the extracellular side. Residues D37 and T73 each contribute to the Zn(2+) site. Residue T73 is the AMP-threonine intermediate of the active site. N94 is a binding site for substrate. N-linked (GlcNAc...) asparagine glycosylation occurs at N148. Y157 is a substrate binding site. A glycan (N-linked (GlcNAc...) asparagine) is linked at N169. Zn(2+)-binding residues include D192, H196, D240, and H241. D192 contacts substrate. Residues C257 and C290 are joined by a disulfide bond. N-linked (GlcNAc...) asparagine glycosylation is found at N279 and N330. H339 contacts Zn(2+). An N-linked (GlcNAc...) asparagine glycan is attached at N389. A disulfide bridge connects residues C397 and C404. A helical transmembrane segment spans residues 411–431 (IGIVVSALLVLTMLTGLMIFM). Over 432–456 (RSRASTSRPFSRLQLQEDDDDPLID) the chain is Cytoplasmic.

The protein belongs to the nucleotide pyrophosphatase/phosphodiesterase family. Requires Zn(2+) as cofactor.

The protein localises to the cell membrane. It carries out the reaction P(1),P(3)-bis(5'-adenosyl) triphosphate + H2O = AMP + ADP + 2 H(+). Functionally, hydrolyzes extracellular Ap3A into AMP and ADP, and Ap4A into AMP and ATP. Ap3A and Ap4A are diadenosine polyphosphates thought to induce proliferation of vascular smooth muscle cells. Acts as a procoagulant, mediating platelet aggregation at the site of nascent thrombus via release of ADP from Ap3A and activation of ADP receptors. In Mus musculus (Mouse), this protein is Bis(5'-adenosyl)-triphosphatase enpp4 (Enpp4).